The sequence spans 361 residues: Mitogen-activated protein kinase 14B (361 aa).

The Protein kinase domain maps to 25-309; it reads YQNLSPVGSG…ASQALAHPYF (285 aa). Residues 31–39 and K54 each bind ATP; that span reads VGSGAYGSV. The active-site Proton acceptor is D151. T181 is modified (phosphothreonine; by MAP2K6). Residues 181–183 carry the TXY motif; it reads TGY. Y183 carries the post-translational modification Phosphotyrosine; by MAP2K6.

Belongs to the protein kinase superfamily. CMGC Ser/Thr protein kinase family. MAP kinase subfamily. Mg(2+) serves as cofactor. Post-translationally, dually phosphorylated on Thr-181 and Tyr-183, which activates the enzyme. Predominantly expressed in the ovary. Lower levels present in brain, gill, heart, spleen, kidney, muscle and gut.

Its subcellular location is the cytoplasm. The protein resides in the nucleus. It catalyses the reaction L-seryl-[protein] + ATP = O-phospho-L-seryl-[protein] + ADP + H(+). The catalysed reaction is L-threonyl-[protein] + ATP = O-phospho-L-threonyl-[protein] + ADP + H(+). Activated by threonine and tyrosine phosphorylation by the dual specificity kinase, MKK6. Functionally, serine/threonine kinase which acts as an essential component of the MAP kinase signal transduction pathway. Mapk14b is one of the four p38 MAPKs which play an important role in the cascades of cellular responses evoked by extracellular stimuli such as pro-inflammatory cytokines or physical stress leading to direct activation of transcription factors. Accordingly, p38 MAPKs phosphorylate a broad range of proteins and it has been estimated that they may have approximately 200 to 300 substrates each. Some of the targets are downstream kinases which are activated through phosphorylation and further phosphorylate additional targets. In Cyprinus carpio (Common carp), this protein is Mitogen-activated protein kinase 14B (mapk14b).